The following is a 230-amino-acid chain: Ribosomal RNA large subunit methyltransferase E (230 aa).

Residues Gly76, Trp78, Asp99, Asp115, and Asp139 each coordinate S-adenosyl-L-methionine. Lys179 functions as the Proton acceptor in the catalytic mechanism.

Belongs to the class I-like SAM-binding methyltransferase superfamily. RNA methyltransferase RlmE family.

Its subcellular location is the cytoplasm. It catalyses the reaction uridine(2552) in 23S rRNA + S-adenosyl-L-methionine = 2'-O-methyluridine(2552) in 23S rRNA + S-adenosyl-L-homocysteine + H(+). Functionally, specifically methylates the uridine in position 2552 of 23S rRNA at the 2'-O position of the ribose in the fully assembled 50S ribosomal subunit. This Nitrobacter winogradskyi (strain ATCC 25391 / DSM 10237 / CIP 104748 / NCIMB 11846 / Nb-255) protein is Ribosomal RNA large subunit methyltransferase E.